We begin with the raw amino-acid sequence, 104 residues long: Large ribosomal subunit protein uL24 (104 aa).

Belongs to the universal ribosomal protein uL24 family. As to quaternary structure, part of the 50S ribosomal subunit.

Its function is as follows. One of two assembly initiator proteins, it binds directly to the 5'-end of the 23S rRNA, where it nucleates assembly of the 50S subunit. Functionally, one of the proteins that surrounds the polypeptide exit tunnel on the outside of the subunit. The sequence is that of Large ribosomal subunit protein uL24 from Clostridium perfringens (strain ATCC 13124 / DSM 756 / JCM 1290 / NCIMB 6125 / NCTC 8237 / Type A).